The primary structure comprises 61 residues: Small ribosomal subunit protein uS14 (61 aa).

Residues Cys24, Cys27, Cys40, and Cys43 each contribute to the Zn(2+) site.

The protein belongs to the universal ribosomal protein uS14 family. Zinc-binding uS14 subfamily. Part of the 30S ribosomal subunit. Contacts proteins S3 and S10. Zn(2+) is required as a cofactor.

Binds 16S rRNA, required for the assembly of 30S particles and may also be responsible for determining the conformation of the 16S rRNA at the A site. The sequence is that of Small ribosomal subunit protein uS14 from Desulfitobacterium hafniense (strain Y51).